The chain runs to 572 residues: Urease subunit alpha (572 aa).

The 442-residue stretch at 131–572 (GGIDAHIHFI…LPLAQRYFLF (442 aa)) folds into the Urease domain. 3 residues coordinate Ni(2+): His136, His138, and Lys219. Lys219 carries the N6-carboxylysine modification. His221 is a binding site for substrate. The Ni(2+) site is built by His248 and His274. His322 acts as the Proton donor in catalysis. Ni(2+) is bound at residue Asp362.

It belongs to the metallo-dependent hydrolases superfamily. Urease alpha subunit family. In terms of assembly, heterotrimer of UreA (gamma), UreB (beta) and UreC (alpha) subunits. Three heterotrimers associate to form the active enzyme. The cofactor is Ni cation. Carboxylation allows a single lysine to coordinate two nickel ions.

The protein resides in the cytoplasm. It carries out the reaction urea + 2 H2O + H(+) = hydrogencarbonate + 2 NH4(+). The protein operates within nitrogen metabolism; urea degradation; CO(2) and NH(3) from urea (urease route): step 1/1. The protein is Urease subunit alpha of Thermosynechococcus vestitus (strain NIES-2133 / IAM M-273 / BP-1).